The primary structure comprises 507 residues: Histidine ammonia-lyase (507 aa).

A cross-link (5-imidazolinone (Ala-Gly)) is located at residues 141 to 143; sequence ASG. Position 142 is a 2,3-didehydroalanine (Ser) (S142).

It belongs to the PAL/histidase family. Contains an active site 4-methylidene-imidazol-5-one (MIO), which is formed autocatalytically by cyclization and dehydration of residues Ala-Ser-Gly.

Its subcellular location is the cytoplasm. It carries out the reaction L-histidine = trans-urocanate + NH4(+). The protein operates within amino-acid degradation; L-histidine degradation into L-glutamate; N-formimidoyl-L-glutamate from L-histidine: step 1/3. This is Histidine ammonia-lyase from Burkholderia mallei (strain NCTC 10247).